We begin with the raw amino-acid sequence, 211 residues long: Putative F-box protein At1g52490 (211 aa).

Residues 12 to 59 form the F-box domain; that stretch reads EEEYLQLPLDLIVEILKKLPLKSLVRFRCVSKQFSTIICSLRDFIESV.

This is Putative F-box protein At1g52490 from Arabidopsis thaliana (Mouse-ear cress).